A 238-amino-acid chain; its full sequence is Flagellar L-ring protein (238 aa).

An N-terminal signal peptide occupies residues 1-23 (MIKLFICQKKYYLTAIFLLTIQS). Residue cysteine 24 is the site of N-palmitoyl cysteine attachment. Cysteine 24 carries S-diacylglycerol cysteine lipidation.

The protein belongs to the FlgH family. The basal body constitutes a major portion of the flagellar organelle and consists of four rings (L,P,S, and M) mounted on a central rod.

The protein localises to the cell outer membrane. The protein resides in the bacterial flagellum basal body. Assembles around the rod to form the L-ring and probably protects the motor/basal body from shearing forces during rotation. This chain is Flagellar L-ring protein, found in Buchnera aphidicola subsp. Acyrthosiphon pisum (strain 5A).